The sequence spans 319 residues: HTH-type transcriptional regulator YidZ (319 aa).

The 58-residue stretch at 8–65 (LDLNLLLCLQLLMQERSVTKAAKRMNVTPSAVSKSLAKLRAWFDDPLFVNTPLGLAPT) folds into the HTH lysR-type domain. A DNA-binding region (H-T-H motif) is located at residues 25-44 (VTKAAKRMNVTPSAVSKSLA).

It belongs to the LysR transcriptional regulatory family.

Its function is as follows. Involved in anaerobic NO protection. The protein is HTH-type transcriptional regulator YidZ of Salmonella typhi.